A 608-amino-acid polypeptide reads, in one-letter code: Kelch-like protein 10 (608 aa).

The region spanning 39 to 106 (CDVVIKVNGF…AYTRTVPITP (68 aa)) is the BTB domain. Kelch repeat units follow at residues 292–339 (ILFA…YLKG), 340–386 (YVYI…VLSN), 388–433 (IYAM…TLYG), 434–480 (KVYI…AYGE), 481–527 (HVYA…VVDD), and 529–574 (LFVV…VVPG). Ser-501 carries the post-translational modification Phosphoserine.

As to quaternary structure, self-associates. Interacts with CUL3; indicative for the participation in an E3 ubiquitin ligase complex. Testis specific.

Its subcellular location is the cytoplasm. The protein operates within protein modification; protein ubiquitination. Its function is as follows. May be a substrate-specific adapter of a CUL3-based E3 ubiquitin-protein ligase complex which mediates the ubiquitination and subsequent proteasomal degradation of target proteins during spermatogenesis. Required for male fertility. This chain is Kelch-like protein 10 (Klhl10), found in Mus musculus (Mouse).